Reading from the N-terminus, the 241-residue chain is Small ribosomal subunit protein uS2 (241 aa).

Belongs to the universal ribosomal protein uS2 family.

This chain is Small ribosomal subunit protein uS2, found in Erwinia tasmaniensis (strain DSM 17950 / CFBP 7177 / CIP 109463 / NCPPB 4357 / Et1/99).